The following is a 251-amino-acid chain: tRNA1(Val) (adenine(37)-N6)-methyltransferase (251 aa).

Belongs to the methyltransferase superfamily. tRNA (adenine-N(6)-)-methyltransferase family.

Its subcellular location is the cytoplasm. It catalyses the reaction adenosine(37) in tRNA1(Val) + S-adenosyl-L-methionine = N(6)-methyladenosine(37) in tRNA1(Val) + S-adenosyl-L-homocysteine + H(+). Specifically methylates the adenine in position 37 of tRNA(1)(Val) (anticodon cmo5UAC). The protein is tRNA1(Val) (adenine(37)-N6)-methyltransferase of Yersinia enterocolitica serotype O:8 / biotype 1B (strain NCTC 13174 / 8081).